Consider the following 322-residue polypeptide: Probable cell division protein WhiA (322 aa).

The H-T-H motif DNA-binding region spans 279 to 312 (SLKELGELWTPPVGKSGVNHRIRKIERLAEKLRS).

The protein belongs to the WhiA family.

Functionally, involved in cell division and chromosome segregation. This chain is Probable cell division protein WhiA, found in Desulforamulus reducens (strain ATCC BAA-1160 / DSM 100696 / MI-1) (Desulfotomaculum reducens).